The sequence spans 45 residues: MKKMSDQLKARLELRLSNAAQPHRNRKREMKRPGKGNRNNWKKEY.

The span at 1 to 14 (MKKMSDQLKARLEL) shows a compositional bias: basic and acidic residues. Residues 1 to 45 (MKKMSDQLKARLELRLSNAAQPHRNRKREMKRPGKGNRNNWKKEY) form a disordered region. Over residues 23–35 (HRNRKREMKRPGK) the composition is skewed to basic residues.

This Mycobacterium phage L5 (Mycobacteriophage L5) protein is Gene 78 protein (78).